Reading from the N-terminus, the 246-residue chain is NADH-quinone oxidoreductase subunit C (246 aa).

Belongs to the complex I 30 kDa subunit family. As to quaternary structure, NDH-1 is composed of 14 different subunits. Subunits NuoB, C, D, E, F, and G constitute the peripheral sector of the complex.

It is found in the cell inner membrane. The catalysed reaction is a quinone + NADH + 5 H(+)(in) = a quinol + NAD(+) + 4 H(+)(out). Its function is as follows. NDH-1 shuttles electrons from NADH, via FMN and iron-sulfur (Fe-S) centers, to quinones in the respiratory chain. The immediate electron acceptor for the enzyme in this species is believed to be ubiquinone. Couples the redox reaction to proton translocation (for every two electrons transferred, four hydrogen ions are translocated across the cytoplasmic membrane), and thus conserves the redox energy in a proton gradient. This is NADH-quinone oxidoreductase subunit C from Halorhodospira halophila (strain DSM 244 / SL1) (Ectothiorhodospira halophila (strain DSM 244 / SL1)).